A 297-amino-acid chain; its full sequence is Succinate dehydrogenase [ubiquinone] iron-sulfur subunit, mitochondrial (297 aa).

The 2Fe-2S ferredoxin-type domain occupies 47 to 140; sequence KKFEIYRWNP…SLKVYPLPHM (94 aa). [2Fe-2S] cluster is bound by residues cysteine 100, cysteine 105, cysteine 108, and cysteine 120. The region spanning 185 to 215 is the 4Fe-4S ferredoxin-type domain; the sequence is DRSKLDGLYECILCACCSTSCPSYWWNAEKY. Cysteine 195, cysteine 198, and cysteine 201 together coordinate [4Fe-4S] cluster. Cysteine 205 lines the [3Fe-4S] cluster pocket. Position 210 (tryptophan 210) interacts with a ubiquinone. Positions 252 and 258 each coordinate [3Fe-4S] cluster. A [4Fe-4S] cluster-binding site is contributed by cysteine 262.

It belongs to the succinate dehydrogenase/fumarate reductase iron-sulfur protein family. In terms of assembly, component of complex II composed of four subunits: a flavoprotein (FP), an iron-sulfur protein (IP), and a cytochrome b composed of a large and a small subunit. [2Fe-2S] cluster is required as a cofactor. The cofactor is [3Fe-4S] cluster. It depends on [4Fe-4S] cluster as a cofactor. Most abundant in the adult thorax and low in abdominal tissues.

The protein localises to the mitochondrion inner membrane. The catalysed reaction is a quinone + succinate = fumarate + a quinol. It participates in carbohydrate metabolism; tricarboxylic acid cycle; fumarate from succinate (eukaryal route): step 1/1. Its function is as follows. Iron-sulfur protein (IP) subunit of succinate dehydrogenase (SDH) that is involved in complex II of the mitochondrial electron transport chain and is responsible for transferring electrons from succinate to ubiquinone (coenzyme Q). The sequence is that of Succinate dehydrogenase [ubiquinone] iron-sulfur subunit, mitochondrial (SdhB) from Drosophila melanogaster (Fruit fly).